Here is a 329-residue protein sequence, read N- to C-terminus: Ketol-acid reductoisomerase (NADP(+)) (329 aa).

Residues 1–181 (MKIYYDQDAD…GGTRGGVLTT (181 aa)) enclose the KARI N-terminal Rossmann domain. Residues 24-27 (YGSQ), R47, and 82-85 (DQHQ) contribute to the NADP(+) site. Residue H107 is part of the active site. G133 serves as a coordination point for NADP(+). Positions 182–327 (TFKEETETDL…AKLRGMMSWL (146 aa)) constitute a KARI C-terminal knotted domain. 4 residues coordinate Mg(2+): D190, E194, E226, and E230. S251 contributes to the substrate binding site.

The protein belongs to the ketol-acid reductoisomerase family. It depends on Mg(2+) as a cofactor.

The enzyme catalyses (2R)-2,3-dihydroxy-3-methylbutanoate + NADP(+) = (2S)-2-acetolactate + NADPH + H(+). It carries out the reaction (2R,3R)-2,3-dihydroxy-3-methylpentanoate + NADP(+) = (S)-2-ethyl-2-hydroxy-3-oxobutanoate + NADPH + H(+). Its pathway is amino-acid biosynthesis; L-isoleucine biosynthesis; L-isoleucine from 2-oxobutanoate: step 2/4. The protein operates within amino-acid biosynthesis; L-valine biosynthesis; L-valine from pyruvate: step 2/4. Functionally, involved in the biosynthesis of branched-chain amino acids (BCAA). Catalyzes an alkyl-migration followed by a ketol-acid reduction of (S)-2-acetolactate (S2AL) to yield (R)-2,3-dihydroxy-isovalerate. In the isomerase reaction, S2AL is rearranged via a Mg-dependent methyl migration to produce 3-hydroxy-3-methyl-2-ketobutyrate (HMKB). In the reductase reaction, this 2-ketoacid undergoes a metal-dependent reduction by NADPH to yield (R)-2,3-dihydroxy-isovalerate. This Solidesulfovibrio magneticus (strain ATCC 700980 / DSM 13731 / RS-1) (Desulfovibrio magneticus) protein is Ketol-acid reductoisomerase (NADP(+)).